We begin with the raw amino-acid sequence, 800 residues long: MSEIIQDLSLEDVLGDRFGRYSKYIIQERALPDVRDGLKPVQRRILYAMYSSGNTHDKNFRKSAKTVGDVIGQYHPHGDFSVYKAMVRLSQDWKLRHVLIEMHGNNGSIDNDPPAAMRYTEAKLSLLAEELLRDINKETVSFIPNYDDTTLEPMVLPSRFPNLLVNGSTGISAGYATDIPPHNLAEVIQATLKYIDNPDITVNQLMKYIKGPDFPTGGIIQGIDGIKKAYESGKGRIIVRSKVEEETLRNGRKQLIITEIPYEVNKSSLVKRIDELRADKKVDGIVEVRDETDRTGLRIAIELKKDVNSESIKNYLYKNSDLQISYNFNMVAISDGRPKLMGIRQIIDSYLNHQIEVVANRTKFELDNAEKRMHIVEGLIKALSILDKVIELIRSSKNKRDAKENLIEVFEFTEEQAEAIVMLQLYRLTNTDIVALEGEHKELEALIKQLRHILDNHDALLNVIKEELNEIKKKFKSERLSLIEAEIEEIKIDKEVMVPSEEVILSMTRHGYIKRTSIRSFNASGVEDIGLKDGDSLLKHQEVNTQDTVLVFTNKGRYLFIPVHKLADIRWKELGQHVSQIVPIEEDEVVINVFNEKDFNTDAFYVFATQNGMIKKSTVPLFKTTRFNKPLIATKVKENDDLISVMRFEKDQLITVITNKGMSLTYNTSELSDTGLRAAGVKSINLKAEDFVVMTEGVSENDTILMATQRGSLKRISFKILQVAKRAQRGITLLKELKKNPHRIVAAHVVTGEHSQYTLYSKSNEEHGLINDIHKSEQYTNGSFIVDTDDFGEVIDMYIS.

Residues 31-495 (LPDVRDGLKP…EIEEIKIDKE (465 aa)) form the Topo IIA-type catalytic domain. The active-site O-(5'-phospho-DNA)-tyrosine intermediate is the Tyr-119.

This sequence belongs to the type II topoisomerase GyrA/ParC subunit family. ParC type 2 subfamily. As to quaternary structure, heterotetramer composed of ParC and ParE.

The protein localises to the cell membrane. It carries out the reaction ATP-dependent breakage, passage and rejoining of double-stranded DNA.. In terms of biological role, topoisomerase IV is essential for chromosome segregation. It relaxes supercoiled DNA. Performs the decatenation events required during the replication of a circular DNA molecule. The protein is DNA topoisomerase 4 subunit A of Staphylococcus aureus.